Here is a 209-residue protein sequence, read N- to C-terminus: Ribosomal RNA large subunit methyltransferase E (209 aa).

Residues Gly63, Trp65, Asp83, Asp99, and Asp124 each coordinate S-adenosyl-L-methionine. Residue Lys164 is the Proton acceptor of the active site.

Belongs to the class I-like SAM-binding methyltransferase superfamily. RNA methyltransferase RlmE family.

The protein localises to the cytoplasm. It catalyses the reaction uridine(2552) in 23S rRNA + S-adenosyl-L-methionine = 2'-O-methyluridine(2552) in 23S rRNA + S-adenosyl-L-homocysteine + H(+). In terms of biological role, specifically methylates the uridine in position 2552 of 23S rRNA at the 2'-O position of the ribose in the fully assembled 50S ribosomal subunit. This is Ribosomal RNA large subunit methyltransferase E from Aeromonas salmonicida (strain A449).